We begin with the raw amino-acid sequence, 194 residues long: Recombination protein RecR (194 aa).

Residues Cys-52 to Cys-67 form a C4-type zinc finger. Residues Gly-76–Pro-171 form the Toprim domain.

Belongs to the RecR family.

Functionally, may play a role in DNA repair. It seems to be involved in an RecBC-independent recombinational process of DNA repair. It may act with RecF and RecO. The sequence is that of Recombination protein RecR from Vibrio campbellii (strain ATCC BAA-1116).